Here is a 648-residue protein sequence, read N- to C-terminus: Threonine--tRNA ligase (648 aa).

The region spanning 1–62 is the TGS domain; it reads MVEIILPDGS…PHGAQVAIIT (62 aa). The segment at 243 to 536 is catalytic; the sequence is DHRRIGKDLD…LVEHYAGWFP (294 aa). Zn(2+) is bound by residues Cys-336, His-387, and His-513.

It belongs to the class-II aminoacyl-tRNA synthetase family. As to quaternary structure, homodimer. Zn(2+) is required as a cofactor.

The protein localises to the cytoplasm. The catalysed reaction is tRNA(Thr) + L-threonine + ATP = L-threonyl-tRNA(Thr) + AMP + diphosphate + H(+). Catalyzes the attachment of threonine to tRNA(Thr) in a two-step reaction: L-threonine is first activated by ATP to form Thr-AMP and then transferred to the acceptor end of tRNA(Thr). Also edits incorrectly charged L-seryl-tRNA(Thr). In Magnetococcus marinus (strain ATCC BAA-1437 / JCM 17883 / MC-1), this protein is Threonine--tRNA ligase.